The primary structure comprises 142 residues: Translation initiation factor 2 subunit beta (142 aa).

Belongs to the eIF-2-beta/eIF-5 family. In terms of assembly, heterotrimer composed of an alpha, a beta and a gamma chain.

Functionally, eIF-2 functions in the early steps of protein synthesis by forming a ternary complex with GTP and initiator tRNA. In Thermococcus gammatolerans (strain DSM 15229 / JCM 11827 / EJ3), this protein is Translation initiation factor 2 subunit beta.